The chain runs to 212 residues: Eukaryotic translation initiation factor 4E-1 (212 aa).

Cys125 and Cys129 form a disulfide bridge.

Belongs to the eukaryotic initiation factor 4E family. As to quaternary structure, EIF4F is a multi-subunit complex, the composition of which varies with external and internal environmental conditions. It is composed of at least EIF4A, EIF4E and EIF4G. EIF4E is also known to interact with other partners, including pgl-1. Interacts with ifet-1. In terms of tissue distribution, enriched in the germline from L3 larvae to adults; regions of the gonad undergoing spermatogenesis. Expressed in germ granules (P granules); when associated with pgl-1.

It is found in the cytoplasm. Its function is as follows. Recognizes and binds the 7-methylguanosine-containing mRNA cap during an early step in the initiation of protein synthesis and facilitates ribosome binding by inducing the unwinding of the mRNAs secondary structures. All 5 eIF4E proteins bind monomethyl cap structures. Only ife-1, ife-2 and ife-5 bind trimethyl cap structures which result from trans-splicing. Translation of trimethyl cap structure mRNAs may be regulated by intracellular redox state; disulfide bonds change the width and depth of the cap-binding cavity determining selectivity to mRNA caps. Required for progression through meiotic divisions during spermatogenesis and for the production of viable sperm. It is not required during oogenesis. This is Eukaryotic translation initiation factor 4E-1 (ife-1) from Caenorhabditis elegans.